The primary structure comprises 375 residues: MYLDHLTVQNFRNLKKLDVDFDPNVNIFIGKNAQGKTNLLEAIYFLALTRSHRTSSDRDLIGFDGEYTNLAGHVQKSQVTLNLRVLITKKGKKVWINRIEQAKLSKYVGQLNAILFSPEDLELIKGAPSLRRRFMDQEFGQINAEYLYFASKYRQVLIQKNNYLKQLAKGKAKDQVFLDVLSDQLAGIAAELIYRRFKFLTYLSHYASDAYTHISLGSEKLSIAYHPSVSDITADDTTEEIYQKILNSFNRNKASEIRKGTTTSGPHRDDIEFKLDGKNAHLYASQGQQRSIALSIKLAEIQLVHQLTDEYPLLLLDDVMSELDHGRQSALLNYIHGKTQTFITTTDLEGISWDIIKKPRVYHIQSGTISLEKEN.

30-37 contributes to the ATP binding site; that stretch reads GKNAQGKT.

This sequence belongs to the RecF family.

It localises to the cytoplasm. In terms of biological role, the RecF protein is involved in DNA metabolism; it is required for DNA replication and normal SOS inducibility. RecF binds preferentially to single-stranded, linear DNA. It also seems to bind ATP. In Lactobacillus acidophilus (strain ATCC 700396 / NCK56 / N2 / NCFM), this protein is DNA replication and repair protein RecF.